The primary structure comprises 157 residues: Nicotinate dehydrogenase subunit A (157 aa).

Residues 3-79 (TTISLQVNGQ…GRNITTLEGL (77 aa)) enclose the 2Fe-2S ferredoxin-type domain. Positions 41, 46, 49, and 61 each coordinate [2Fe-2S] cluster.

[2Fe-2S] cluster is required as a cofactor.

It carries out the reaction 2 Fe(III)-[cytochrome] + nicotinate + H2O = 2 Fe(II)-[cytochrome] + 6-hydroxynicotinate + 2 H(+). The protein operates within cofactor degradation; nicotinate degradation. Its function is as follows. Subunit of the two-component enzyme NicAB that mediates nicotinate hydroxylation, the first step in the aerobic nicotinate degradation pathway. Mediates conversion of nicotinate into 6-hydroxynicotinate (6HNA). The chain is Nicotinate dehydrogenase subunit A (nicA) from Pseudomonas putida (strain ATCC 47054 / DSM 6125 / CFBP 8728 / NCIMB 11950 / KT2440).